The sequence spans 259 residues: uncharacterized protein (259 aa).

A coiled-coil region spans residues 158-187; that stretch reads VELHLKIIEEDMKETTKKNKEKKQNSQSQE. Over residues 172–181 the composition is skewed to basic and acidic residues; that stretch reads TTKKNKEKKQ. 2 disordered regions span residues 172–197 and 217–240; these read TTKK…MEVS and PVKK…QLSK. 2 stretches are compositionally biased toward low complexity: residues 182–193 and 217–226; these read NSQSQEISNSIE and PVKKTSSASK.

This is an uncharacterized protein from Acanthamoeba polyphaga mimivirus (APMV).